A 352-amino-acid polypeptide reads, in one-letter code: Mitochondrial adenine nucleotide transporter ADNT1 (352 aa).

Solcar repeat units lie at residues Lys-36–Gly-123, Leu-139–Trp-227, and Leu-242–Val-343. 6 consecutive transmembrane segments (helical) span residues Ser-41–Arg-61, Gly-100–Ala-120, Leu-145–Met-162, Gly-202–Tyr-221, Leu-242–Tyr-263, and Val-324–Val-340.

The protein belongs to the mitochondrial carrier (TC 2.A.29) family. In terms of tissue distribution, expressed in seedling radicles and roots, vasculature of cotyledons, leaf primordia, leaves and sepals.

The protein localises to the mitochondrion inner membrane. With respect to regulation, inhibited by pyridoxal 5-phosphate, bathophenanthroline, mersalyl, p-hydroxymercuribenzoate and tannic acid. Functionally, mitochondrial adenylate carrier that catalyzes specifically the transport of ATP, ADP and AMP by a counter-exchange mechanism across the inner mitochondrial membrane. Substrate preference in reconstituted proteoliposomes is ATP &gt; AMP &gt; ADP. May play a role in oxidative phosphorylation and be important for the provision of energy required to support growth in heterotrophic tissues. This is Mitochondrial adenine nucleotide transporter ADNT1 (ADNT1) from Arabidopsis thaliana (Mouse-ear cress).